The primary structure comprises 92 residues: Small ribosomal subunit protein uS19 (92 aa).

This sequence belongs to the universal ribosomal protein uS19 family.

In terms of biological role, protein S19 forms a complex with S13 that binds strongly to the 16S ribosomal RNA. The sequence is that of Small ribosomal subunit protein uS19 from Brucella ovis (strain ATCC 25840 / 63/290 / NCTC 10512).